Reading from the N-terminus, the 556-residue chain is Oxygen-dependent choline dehydrogenase (556 aa).

Residue 4–33 participates in FAD binding; the sequence is DYIIIGAGSAGNVLATRLTEDPNTTVLLLE. Catalysis depends on His473, which acts as the Proton acceptor.

Belongs to the GMC oxidoreductase family. The cofactor is FAD.

The catalysed reaction is choline + A = betaine aldehyde + AH2. It catalyses the reaction betaine aldehyde + NAD(+) + H2O = glycine betaine + NADH + 2 H(+). It functions in the pathway amine and polyamine biosynthesis; betaine biosynthesis via choline pathway; betaine aldehyde from choline (cytochrome c reductase route): step 1/1. Its function is as follows. Involved in the biosynthesis of the osmoprotectant glycine betaine. Catalyzes the oxidation of choline to betaine aldehyde and betaine aldehyde to glycine betaine at the same rate. The chain is Oxygen-dependent choline dehydrogenase from Escherichia coli O17:K52:H18 (strain UMN026 / ExPEC).